The primary structure comprises 882 residues: Homeobox-leucine zipper protein ROC3 (882 aa).

The disordered stretch occupies residues 104–144; it reads DVDDDHKPQHSGHDQPPDAAQPSGAAGGNAKKKRYHRHTAH. The span at 107 to 119 shows a compositional bias: basic and acidic residues; it reads DDHKPQHSGHDQP. Basic residues predominate over residues 133 to 143; the sequence is AKKKRYHRHTA. The segment at residues 134 to 193 is a DNA-binding region (homeobox); sequence KKKRYHRHTAHQIQQMEALFKECPHPDDKQRLKLSQELGLKPRQVKFWFQNRRTQMKAQQ. Residues 200-263 adopt a coiled-coil conformation; the sequence is ILRAENENLK…LDRLACIATR (64 aa). In terms of domain architecture, START spans 340–584; it reads QEQDKQLVVD…LQRQCERLAS (245 aa). The segment covering 782 to 816 has biased composition (low complexity); sequence AAAPTISSSTTTTTGNGNGETSSTPPRNSSSNNNN. A disordered region spans residues 782–820; it reads AAAPTISSSTTTTTGNGNGETSSTPPRNSSSNNNNADEL.

Belongs to the HD-ZIP homeobox family. Class IV subfamily.

Its subcellular location is the nucleus. In terms of biological role, probable transcription factor. This chain is Homeobox-leucine zipper protein ROC3 (ROC3), found in Oryza sativa subsp. indica (Rice).